Reading from the N-terminus, the 100-residue chain is Large ribosomal subunit protein eL21 (100 aa).

This sequence belongs to the eukaryotic ribosomal protein eL21 family.

The sequence is that of Large ribosomal subunit protein eL21 from Pyrobaculum aerophilum (strain ATCC 51768 / DSM 7523 / JCM 9630 / CIP 104966 / NBRC 100827 / IM2).